The chain runs to 60 residues: RDAYPADWRGCKPSCPWGSSSWCNEECTSLGGSSGYCAWPACWCYGLPDSVRYYNNKCHK.

The region spanning 1–59 (RDAYPADWRGCKPSCPWGSSSWCNEECTSLGGSSGYCAWPACWCYGLPDSVRYYNNKCH) is the LCN-type CS-alpha/beta domain. 4 disulfide bridges follow: Cys11–Cys58, Cys15–Cys37, Cys23–Cys42, and Cys27–Cys44.

The protein belongs to the long (4 C-C) scorpion toxin superfamily. Sodium channel inhibitor family. Beta subfamily. In terms of tissue distribution, expressed by the venom gland.

It is found in the secreted. In terms of biological role, inhibits the sodium currents (Nav) in an apparent irreversible manner. Produces small depolarization and induces repetitive firing in squid axons. Is specific for arthropods (crickets, triatomides, crabs and squids), but is non-toxic to mice. The sequence is that of Toxin TdNa2 from Tityus discrepans (Venezuelan scorpion).